Here is a 318-residue protein sequence, read N- to C-terminus: D-alanine--D-alanine ligase B (318 aa).

Positions 116–311 (KQVWQSLGIP…FQQLVLAILA (196 aa)) constitute an ATP-grasp domain. 142–197 (STELGFPLIVKPAHEGSSIGMAKVNSTQELVAAWQDAAKYDSQVLVEQWIHGPEFT) is a binding site for ATP. Mg(2+) contacts are provided by D265, E278, and N280.

The protein belongs to the D-alanine--D-alanine ligase family. The cofactor is Mg(2+). It depends on Mn(2+) as a cofactor.

It is found in the cytoplasm. It catalyses the reaction 2 D-alanine + ATP = D-alanyl-D-alanine + ADP + phosphate + H(+). Its pathway is cell wall biogenesis; peptidoglycan biosynthesis. In terms of biological role, cell wall formation. The sequence is that of D-alanine--D-alanine ligase B from Pseudomonas putida (strain ATCC 47054 / DSM 6125 / CFBP 8728 / NCIMB 11950 / KT2440).